Reading from the N-terminus, the 310-residue chain is Vomeronasal type-1 receptor 50 (310 aa).

Residues 1–16 lie on the Extracellular side of the membrane; that stretch reads MSKANLLHTDNNMKIT. The chain crosses the membrane as a helical span at residues 17–37; sequence LFSEVSVGISANSILFVVHLC. Residues 38–50 are Cytoplasmic-facing; the sequence is KLLHENKPKPIDL. A helical membrane pass occupies residues 51–71; it reads YIAFFSITQLMLLITMGLIAV. At 72-93 the chain is on the extracellular side; sequence DMFMPWGRWDSTTCQSLIYLHR. Cysteine 85 and cysteine 172 are disulfide-bonded. A helical membrane pass occupies residues 94 to 114; the sequence is LLRGLTFCATCLLNVLWTITL. At 115 to 134 the chain is on the cytoplasmic side; sequence SPRSSCLTKFKHKSPHHISG. A helical transmembrane segment spans residues 135–155; it reads AFLFFCVLYMSFSSHLLVSII. At 156-193 the chain is on the extracellular side; that stretch reads ATFNSTSDNFLYVTQSCSILPVSYSRTSILSTMMTMRE. Asparagine 159 carries an N-linked (GlcNAc...) asparagine glycan. Residues 194 to 214 form a helical membrane-spanning segment; that stretch reads AFLIGLMALSSGYVVVLLWRH. Residues 215–237 lie on the Cytoplasmic side of the membrane; sequence KKQARHLHSTSLSSKASPEQRAT. Residues 238-258 traverse the membrane as a helical segment; that stretch reads STIMLLMGFFVVLYILDTVIF. The Extracellular segment spans residues 259 to 269; that stretch reads QARLKFKDVST. A helical transmembrane segment spans residues 270–290; it reads FFCVKIIISHSYATFSPFVFI. Over 291–310 the chain is Cytoplasmic; it reads CNDKYMIKFVTSMCGRIVNV.

It belongs to the G-protein coupled receptor 1 family. In terms of tissue distribution, expressed in a subset of sensory neurons located in the apical layer of the vomeronasal organ.

The protein resides in the cell membrane. In terms of biological role, putative pheromone receptor implicated in the regulation of social and reproductive behavior. The sequence is that of Vomeronasal type-1 receptor 50 (Vmn1r50) from Mus musculus (Mouse).